The primary structure comprises 546 residues: Zinc finger and BTB domain-containing protein 7A (546 aa).

The BTB domain occupies 34 to 101 (CDVVILVEGQ…AYTATLTVST (68 aa)). A disordered region spans residues 189 to 288 (QEDEEEPDCN…SFVPTGAEAE (100 aa)). C2H2-type zinc fingers lie at residues 359–381 (QKCP…IRTH), 387–409 (YECN…MRKH), and 415–437 (YLCQ…MRVH). Residues 443 to 467 (YQCDSCFKTFVRSDHLHRHLKKDGC) form a C2H2-type 4; atypical zinc finger. The disordered stretch occupies residues 463–546 (KKDGCNGIPS…AAEGSAPGPS (84 aa)). Over residues 534–546 (AGGAAEGSAPGPS) the composition is skewed to low complexity.

The protein resides in the nucleus. Transcription factor that represses the transcription of a wide range of genes involved in cell proliferation and differentiation. Directly and specifically binds to the consensus sequence 5'-[GA][CA]GACCCCCCCCC-3' and represses transcription both by regulating the organization of chromatin and through the direct recruitment of transcription factors to gene regulatory regions. May also play a role, independently of its transcriptional activity, in double-strand break repair via classical non-homologous end joining/cNHEJ and in alternative splicing. This Gallus gallus (Chicken) protein is Zinc finger and BTB domain-containing protein 7A.